The sequence spans 173 residues: Photosystem I assembly protein Ycf3 (173 aa).

TPR repeat units follow at residues 35–68, 72–105, and 113–146; these read AFAY…EEDP, SYIL…NPRM, and AVIY…WKRA.

This sequence belongs to the Ycf3 family.

The protein localises to the cellular thylakoid membrane. Functionally, essential for the assembly of the photosystem I (PSI) complex. May act as a chaperone-like factor to guide the assembly of the PSI subunits. The protein is Photosystem I assembly protein Ycf3 of Thermosynechococcus vestitus (strain NIES-2133 / IAM M-273 / BP-1).